A 220-amino-acid chain; its full sequence is N-(5'-phosphoribosyl)anthranilate isomerase (220 aa).

This sequence belongs to the TrpF family.

It carries out the reaction N-(5-phospho-beta-D-ribosyl)anthranilate = 1-(2-carboxyphenylamino)-1-deoxy-D-ribulose 5-phosphate. The protein operates within amino-acid biosynthesis; L-tryptophan biosynthesis; L-tryptophan from chorismate: step 3/5. This is N-(5'-phosphoribosyl)anthranilate isomerase from Agrobacterium fabrum (strain C58 / ATCC 33970) (Agrobacterium tumefaciens (strain C58)).